A 1693-amino-acid polypeptide reads, in one-letter code: 1-phosphatidylinositol 4,5-bisphosphate phosphodiesterase eta-1 (1693 aa).

The 109-residue stretch at 20–128 folds into the PH domain; sequence SVMQSGTQMI…WITGLKYLMA (109 aa). EF-hand domains lie at 142-177, 178-214, and 226-246; these read THDQ…LNVN, LPRR…MSLR, and DKKD…EQKM. Ca(2+) contacts are provided by aspartate 155, asparagine 157, aspartate 159, and glutamate 166. Residues 299 to 444 form the PI-PLC X-box domain; the sequence is QDMDQPLCNY…LKGKILVKGK (146 aa). Histidine 314 is an active-site residue. Residues asparagine 315, glutamate 344, and aspartate 346 each contribute to the Ca(2+) site. Histidine 358 is a catalytic residue. Ca(2+) is bound at residue glutamate 393. 2 residues coordinate substrate: lysine 442 and lysine 444. Positions 526–585 are disordered; sequence LNAHLKQSPDVKESGKKSHGRSLMTNFGKHKKTTKSRSKSYSTDDEEDTQQSTGKEGGQL. Over residues 532–541 the composition is skewed to basic and acidic residues; sequence QSPDVKESGK. Over residues 553–563 the composition is skewed to basic residues; that stretch reads GKHKKTTKSRS. The PI-PLC Y-box domain occupies 601–714; it reads LSDLVVYTNS…GYVLKPQQMC (114 aa). Substrate-binding residues include serine 627 and arginine 654. One can recognise a C2 domain in the interval 715–843; the sequence is KGTFNPFSGD…PGYRHVYLEG (129 aa). Isoleucine 758, aspartate 760, aspartate 784, aspartate 813, histidine 814, and aspartate 815 together coordinate Ca(2+). Residues 992-1005 are compositionally biased toward basic and acidic residues; that stretch reads IEGKENSLAEDKDG. Disordered stretches follow at residues 992–1014, 1052–1089, 1300–1329, and 1578–1613; these read IEGK…ASIK, TGEQ…PKQH, LESN…ETLK, and LSSR…GAGV. Residues 1065-1086 are compositionally biased toward polar residues; that stretch reads RTTSNATSNCQENPCPSKSLSP. Residues 1592-1601 are compositionally biased toward basic and acidic residues; that stretch reads RAKEKQEANK.

It depends on Ca(2+) as a cofactor. Expressed in brain and to a lower extent in lung. In brain, it is found in cerebrum, cerebellum and spinal cord. In embryo expressed in the notochord, developing spinal cord (in a ventral to dorsal gradient), dorsal root ganglia, cerebellum and dermatomyosome.

It is found in the cytoplasm. It localises to the membrane. The catalysed reaction is a 1,2-diacyl-sn-glycero-3-phospho-(1D-myo-inositol-4,5-bisphosphate) + H2O = 1D-myo-inositol 1,4,5-trisphosphate + a 1,2-diacyl-sn-glycerol + H(+). The production of the second messenger molecules diacylglycerol (DAG) and inositol 1,4,5-trisphosphate (IP3) is mediated by calcium-activated phosphatidylinositol-specific phospholipase C enzymes. The polypeptide is 1-phosphatidylinositol 4,5-bisphosphate phosphodiesterase eta-1 (Homo sapiens (Human)).